We begin with the raw amino-acid sequence, 662 residues long: Glutathione hydrolase 7 (662 aa).

Residues 1 to 106 (MAAENEASQE…AAECSCRQDG (106 aa)) lie on the Cytoplasmic side of the membrane. A phosphoserine mark is found at S17, S72, S79, and S83. A disordered region spans residues 26-90 (SFPRLPEDEP…DGSPLRETRK (65 aa)). Positions 72–83 (SSSSEMGSQDGS) are enriched in low complexity. The helical; Signal-anchor for type II membrane protein transmembrane segment at 107-127 (LTVIVTACLTFATGVTVALVM) threads the bilayer. Residues 128–662 (QIYFGDPQIF…SLDATGASIL (535 aa)) are Extracellular-facing. N198, N267, N283, N330, N353, N394, N519, N523, and N586 each carry an N-linked (GlcNAc...) asparagine glycan.

It belongs to the gamma-glutamyltransferase family. As to quaternary structure, heterodimer composed of the light and heavy chains. The active site is located in the light chain. Cleaved by autocatalysis into a large and a small subunit and the autocatalytic cleavage is essential to the functional activation of the enzyme.

Its subcellular location is the membrane. The enzyme catalyses an N-terminal (5-L-glutamyl)-[peptide] + an alpha-amino acid = 5-L-glutamyl amino acid + an N-terminal L-alpha-aminoacyl-[peptide]. The catalysed reaction is glutathione + H2O = L-cysteinylglycine + L-glutamate. It carries out the reaction an S-substituted glutathione + H2O = an S-substituted L-cysteinylglycine + L-glutamate. The protein operates within sulfur metabolism; glutathione metabolism. Functionally, hydrolyzes and transfers gamma-glutamyl moieties from glutathione and other gamma-glutamyl compounds to acceptors. The protein is Glutathione hydrolase 7 of Rattus norvegicus (Rat).